The chain runs to 465 residues: Sushi repeat-containing protein SRPX2 (465 aa).

The signal sequence occupies residues 1 to 23; that stretch reads MAIQLTRRGALSLLLFLTPAVMP. 3 Sushi domains span residues 69–119, 120–178, and 262–321; these read ATCY…YCRQ, MRCH…VCVD, and RRCP…VCVP. 4 disulfide bridges follow: Cys-71/Cys-105, Cys-91/Cys-117, Cys-122/Cys-163, and Cys-149/Cys-176. Positions 177–261 constitute an HYR domain; sequence VDIDPPKIRC…SCKFIVKVQV (85 aa). 2 disulfide bridges follow: Cys-264–Cys-306 and Cys-292–Cys-319.

Forms homooligomers. Interacts with PLAUR (via the UPAR/Ly6 domains), ADAMTS4 and CTSB. Interacts with HGF; the interaction increases the mitogenic activity of HGF. Contains chondroitin sulfate chains.

The protein localises to the secreted. It localises to the cytoplasm. Its subcellular location is the cell surface. The protein resides in the synapse. Its function is as follows. Acts as a ligand for the urokinase plasminogen activator surface receptor. Plays a role in angiogenesis by inducing endothelial cell migration and the formation of vascular network (cords). Involved in cellular migration and adhesion. Increases the phosphorylation levels of FAK. Interacts with and increases the mitogenic activity of HGF. Promotes synapse formation. The sequence is that of Sushi repeat-containing protein SRPX2 (SRPX2) from Bos taurus (Bovine).